The sequence spans 367 residues: Cellular tumor antigen p53 (367 aa).

The tract at residues 1–30 (MAEEMEPLLEPTEVFMDLWSMLPYSMQQLP) is transcription activation (acidic). The disordered stretch occupies residues 30-84 (PLPEDHSNWQELSPLEPSDPPPPPPPPPLPLAAAAPPPLNPPTPPRAAPSPVVPS). Over residues 46–81 (PSDPPPPPPPPPLPLAAAAPPPLNPPTPPRAAPSPV) the composition is skewed to pro residues. Residues 87-278 (DYGGDFDFRV…KIEEENFRKR (192 aa)) mediate DNA binding. Positions 161, 164, 224, and 228 each coordinate Zn(2+). The tract at residues 259–266 (RVCACPGR) is interaction with DNA. Disordered regions lie at residues 275–303 (FRKRGGAGGVAKRAMSPPTEAPEPPKKRV) and 333–367 (LAEGGSAPRPSKGRRVKVEGPQPSCGKKLLQKGSD). Positions 286–302 (KRAMSPPTEAPEPPKKR) match the Bipartite nuclear localization signal motif. The tract at residues 308–339 (NEIFYLQVRGRRRYEMLKEINEALQLAEGGSA) is oligomerization. The Nuclear export signal motif lies at 322-333 (EMLKEINEALQL). The tract at residues 347-364 (RVKVEGPQPSCGKKLLQK) is basic (repression of DNA-binding).

Belongs to the p53 family. As to quaternary structure, binds DNA as a homotetramer. It depends on Zn(2+) as a cofactor.

It is found in the cytoplasm. The protein localises to the nucleus. Multifunctional transcription factor that induces cell cycle arrest, DNA repair or apoptosis upon binding to its target DNA sequence. Acts as a tumor suppressor in many tumor types; induces growth arrest or apoptosis depending on the physiological circumstances and cell type. Negatively regulates cell division by controlling expression of a set of genes required for this process. One of the activated genes is an inhibitor of cyclin-dependent kinases. Apoptosis induction seems to be mediated either by stimulation of BAX and FAS antigen expression, or by repression of Bcl-2 expression. The chain is Cellular tumor antigen p53 (TP53) from Gallus gallus (Chicken).